The primary structure comprises 406 residues: Homocitrate synthase AksA (406 aa).

In terms of domain architecture, Pyruvate carboxyltransferase spans 32–285; it reads IYIYDTTLRD…DLGLNLEVLP (254 aa).

Belongs to the alpha-IPM synthase/homocitrate synthase family.

It catalyses the reaction acetyl-CoA + 2-oxoglutarate + H2O = (2R)-homocitrate + CoA + H(+). It carries out the reaction 2-oxoadipate + acetyl-CoA + H2O = (R)-dihomocitrate + CoA + H(+). The enzyme catalyses 2-oxoheptanedioate + acetyl-CoA + H2O = (R)-trihomocitrate + CoA + H(+). Its pathway is organic acid metabolism; 2-oxosuberate biosynthesis. Its function is as follows. Catalyzes the condensation of alpha-ketoglutarate and acetyl-CoA to form (R)-homocitrate. Can also catalyze the condensation of alpha-ketoadipate with acetyl-CoA to form (R)-homo(2)citrate, and the condensation of alpha-ketopimelate with acetyl-CoA to form (R)-homo(3)citrate. These reactions are part of the biosynthesis pathway of coenzyme B and biotin. In Methanocaldococcus jannaschii (strain ATCC 43067 / DSM 2661 / JAL-1 / JCM 10045 / NBRC 100440) (Methanococcus jannaschii), this protein is Homocitrate synthase AksA (aksA).